A 145-amino-acid polypeptide reads, in one-letter code: MLDIQQIQAIIPHRYPFLLVDRILEIEEGKRAVGIKNVSANESFFAGHFPEYPVMPGVLIVEALAQVGAVVLLQSEENRGRLAFFAGIDNCRFKKQVQPGDQLRLEVEILRARGSIGKGKGVATVNGELVCETELMFALGDKPAN.

His-48 is a catalytic residue.

It belongs to the thioester dehydratase family. FabZ subfamily.

The protein localises to the cytoplasm. It catalyses the reaction a (3R)-hydroxyacyl-[ACP] = a (2E)-enoyl-[ACP] + H2O. Its function is as follows. Involved in unsaturated fatty acids biosynthesis. Catalyzes the dehydration of short chain beta-hydroxyacyl-ACPs and long chain saturated and unsaturated beta-hydroxyacyl-ACPs. This is 3-hydroxyacyl-[acyl-carrier-protein] dehydratase FabZ from Geobacillus thermodenitrificans (strain NG80-2).